The chain runs to 186 residues: ATP synthase subunit delta (186 aa).

This sequence belongs to the ATPase delta chain family. As to quaternary structure, F-type ATPases have 2 components, F(1) - the catalytic core - and F(0) - the membrane proton channel. F(1) has five subunits: alpha(3), beta(3), gamma(1), delta(1), epsilon(1). F(0) has three main subunits: a(1), b(2) and c(10-14). The alpha and beta chains form an alternating ring which encloses part of the gamma chain. F(1) is attached to F(0) by a central stalk formed by the gamma and epsilon chains, while a peripheral stalk is formed by the delta and b chains.

Its subcellular location is the cell inner membrane. Functionally, f(1)F(0) ATP synthase produces ATP from ADP in the presence of a proton or sodium gradient. F-type ATPases consist of two structural domains, F(1) containing the extramembraneous catalytic core and F(0) containing the membrane proton channel, linked together by a central stalk and a peripheral stalk. During catalysis, ATP synthesis in the catalytic domain of F(1) is coupled via a rotary mechanism of the central stalk subunits to proton translocation. This protein is part of the stalk that links CF(0) to CF(1). It either transmits conformational changes from CF(0) to CF(1) or is implicated in proton conduction. The chain is ATP synthase subunit delta from Chelativorans sp. (strain BNC1).